Consider the following 1334-residue polypeptide: Putative transmembrane protein ORF1334 (1334 aa).

The chain crosses the membrane as a helical span at residues 53–73; that stretch reads VSIVVLVLTLFIIPVIIPPAH. Residues 1107–1135 are disordered; that stretch reads LSASTTPPSSTTPTPPSSSSSSSSSSSIS. Over residues 1110–1135 the composition is skewed to low complexity; sequence STTPPSSTTPTPPSSSSSSSSSSSIS. Helical transmembrane passes span 1256–1276, 1292–1312, and 1313–1333; these read AVLPPIYALPLFLLFAGSFFI, IIYIFFVAPFLIVIGIPTSVV, and YGTVVGALIIIIIGLWASRSQ.

Its subcellular location is the host membrane. This chain is Putative transmembrane protein ORF1334, found in Acidianus two-tailed virus (ATV).